Here is a 295-residue protein sequence, read N- to C-terminus: Maintenance of mitochondrial morphology protein 1 (295 aa).

Over M1–G12 the chain is Lumenal. The helical transmembrane segment at F13–F33 threads the bilayer. At C34–E295 the chain is on the cytoplasmic side. The SMP-LTD domain occupies E81–P278.

It belongs to the MMM1 family. As to quaternary structure, homodimer. Component of the ER-mitochondria encounter structure (ERMES) or MDM complex, composed of mmm1, mdm10, mdm12 and mdm34. A mmm1 homodimer associates with one molecule of mdm12 on each side in a pairwise head-to-tail manner, and the SMP-LTD domains of mmm1 and mdm12 generate a continuous hydrophobic tunnel for phospholipid trafficking.

The protein localises to the endoplasmic reticulum membrane. Its function is as follows. Component of the ERMES/MDM complex, which serves as a molecular tether to connect the endoplasmic reticulum (ER) and mitochondria. Components of this complex are involved in the control of mitochondrial shape and protein biogenesis, and function in nonvesicular lipid trafficking between the ER and mitochondria. The mdm12-mmm1 subcomplex functions in the major beta-barrel assembly pathway that is responsible for biogenesis of all outer membrane beta-barrel proteins, and acts in a late step after the SAM complex. The mdm10-mdm12-mmm1 subcomplex further acts in the TOM40-specific pathway after the action of the mdm12-mmm1 complex. Essential for establishing and maintaining the structure of mitochondria and maintenance of mtDNA nucleoids. The polypeptide is Maintenance of mitochondrial morphology protein 1 (Schizosaccharomyces japonicus (strain yFS275 / FY16936) (Fission yeast)).